We begin with the raw amino-acid sequence, 796 residues long: U-box domain-containing protein 51 (796 aa).

3 disordered regions span residues 163-195 (DMDT…SSHQ), 218-240 (TNIG…SLDV), and 270-292 (RSSQ…SSSQ). Basic and acidic residues predominate over residues 171–181 (ADDRSESRFSS). Residues 182–195 (DSHSGTVSSTSSHQ) show a composition bias toward low complexity. Low complexity predominate over residues 270 to 291 (RSSQMEEASSSSTYSDPTSSSS). Residues 298–407 (ELEKLKIELR…QRLEDALEGG (110 aa)) are a coiled coil. One can recognise a Protein kinase domain in the interval 429-700 (FSDELKIGVG…DLGKEILPVL (272 aa)). ATP contacts are provided by residues 435 to 443 (IGVGGYGSV) and Lys456. Asp557 acts as the Proton acceptor in catalysis. Positions 724 to 796 (NAPTHFYCPI…IKEWRSQLIK (73 aa)) constitute a U-box domain.

This sequence belongs to the protein kinase superfamily. Ser/Thr protein kinase family.

The enzyme catalyses L-seryl-[protein] + ATP = O-phospho-L-seryl-[protein] + ADP + H(+). The catalysed reaction is L-threonyl-[protein] + ATP = O-phospho-L-threonyl-[protein] + ADP + H(+). It catalyses the reaction S-ubiquitinyl-[E2 ubiquitin-conjugating enzyme]-L-cysteine + [acceptor protein]-L-lysine = [E2 ubiquitin-conjugating enzyme]-L-cysteine + N(6)-ubiquitinyl-[acceptor protein]-L-lysine.. The protein operates within protein modification; protein ubiquitination. Its function is as follows. Functions as an E3 ubiquitin ligase. This is U-box domain-containing protein 51 (PUB51) from Arabidopsis thaliana (Mouse-ear cress).